A 430-amino-acid chain; its full sequence is Gamma-glutamyl phosphate reductase (430 aa).

This sequence belongs to the gamma-glutamyl phosphate reductase family.

Its subcellular location is the cytoplasm. It carries out the reaction L-glutamate 5-semialdehyde + phosphate + NADP(+) = L-glutamyl 5-phosphate + NADPH + H(+). The protein operates within amino-acid biosynthesis; L-proline biosynthesis; L-glutamate 5-semialdehyde from L-glutamate: step 2/2. Functionally, catalyzes the NADPH-dependent reduction of L-glutamate 5-phosphate into L-glutamate 5-semialdehyde and phosphate. The product spontaneously undergoes cyclization to form 1-pyrroline-5-carboxylate. This is Gamma-glutamyl phosphate reductase from Rhodopseudomonas palustris (strain BisB5).